We begin with the raw amino-acid sequence, 195 residues long: Holliday junction branch migration complex subunit RuvA (195 aa).

Residues 1 to 64 (MIKGVEGEIT…DRAPEIYGFK (64 aa)) form a domain I region. The tract at residues 65–137 (DRAEYNVFLM…LYDLVKDYAV (73 aa)) is domain II. The tract at residues 137-141 (VEFPK) is flexible linker. The segment at 142–195 (ELSDVSEDAVGALTALGFDMTSAKLAVNEVLKEQTVENTQELVRKALRKLNKTR) is domain III.

This sequence belongs to the RuvA family. Homotetramer. Forms an RuvA(8)-RuvB(12)-Holliday junction (HJ) complex. HJ DNA is sandwiched between 2 RuvA tetramers; dsDNA enters through RuvA and exits via RuvB. An RuvB hexamer assembles on each DNA strand where it exits the tetramer. Each RuvB hexamer is contacted by two RuvA subunits (via domain III) on 2 adjacent RuvB subunits; this complex drives branch migration. In the full resolvosome a probable DNA-RuvA(4)-RuvB(12)-RuvC(2) complex forms which resolves the HJ.

The protein localises to the cytoplasm. Its function is as follows. The RuvA-RuvB-RuvC complex processes Holliday junction (HJ) DNA during genetic recombination and DNA repair, while the RuvA-RuvB complex plays an important role in the rescue of blocked DNA replication forks via replication fork reversal (RFR). RuvA specifically binds to HJ cruciform DNA, conferring on it an open structure. The RuvB hexamer acts as an ATP-dependent pump, pulling dsDNA into and through the RuvAB complex. HJ branch migration allows RuvC to scan DNA until it finds its consensus sequence, where it cleaves and resolves the cruciform DNA. The chain is Holliday junction branch migration complex subunit RuvA from Kosmotoga olearia (strain ATCC BAA-1733 / DSM 21960 / TBF 19.5.1).